We begin with the raw amino-acid sequence, 332 residues long: Heat-inducible transcription repressor HrcA (332 aa).

Belongs to the HrcA family.

In terms of biological role, negative regulator of class I heat shock genes (grpE-dnaK-dnaJ and groELS operons). Prevents heat-shock induction of these operons. In Mycoplasma mobile (strain ATCC 43663 / 163K / NCTC 11711) (Mesomycoplasma mobile), this protein is Heat-inducible transcription repressor HrcA.